The sequence spans 91 residues: Small ribosomal subunit protein uS15 (91 aa).

It belongs to the universal ribosomal protein uS15 family. As to quaternary structure, part of the 30S ribosomal subunit. Forms a bridge to the 50S subunit in the 70S ribosome, contacting the 23S rRNA.

In terms of biological role, one of the primary rRNA binding proteins, it binds directly to 16S rRNA where it helps nucleate assembly of the platform of the 30S subunit by binding and bridging several RNA helices of the 16S rRNA. Functionally, forms an intersubunit bridge (bridge B4) with the 23S rRNA of the 50S subunit in the ribosome. In Amoebophilus asiaticus (strain 5a2), this protein is Small ribosomal subunit protein uS15.